A 228-amino-acid chain; its full sequence is Endonuclease V (228 aa).

Residues aspartate 43 and aspartate 109 each coordinate Mg(2+).

This sequence belongs to the endonuclease V family. Mg(2+) serves as cofactor.

The protein localises to the cytoplasm. It carries out the reaction Endonucleolytic cleavage at apurinic or apyrimidinic sites to products with a 5'-phosphate.. DNA repair enzyme involved in the repair of deaminated bases. Selectively cleaves double-stranded DNA at the second phosphodiester bond 3' to a deoxyinosine leaving behind the intact lesion on the nicked DNA. The sequence is that of Endonuclease V from Dictyoglomus thermophilum (strain ATCC 35947 / DSM 3960 / H-6-12).